Consider the following 42-residue polypeptide: Osteocalcin (42 aa).

The 40-residue stretch at 1-40 (YLDHGLGAPAPYVDPLEPKREVDELADQMGFQEAYRRFYG) folds into the Gla domain. Proline 9 carries the 4-hydroxyproline modification. Ca(2+) is bound by residues glutamate 17, glutamate 21, and aspartate 23. 4-carboxyglutamate occurs at positions 17 and 21.

Belongs to the osteocalcin/matrix Gla protein family. Post-translationally, gamma-carboxyglutamic acid residues are formed by vitamin K dependent carboxylation. These residues are essential for the binding of calcium.

It localises to the secreted. Functionally, the carboxylated form is one of the main organic components of the bone matrix, which constitutes 1-2% of the total bone protein: it acts as a negative regulator of bone formation and is required to limit bone formation without impairing bone resorption or mineralization. The carboxylated form binds strongly to apatite and calcium. The uncarboxylated form acts as a hormone secreted by osteoblasts, which regulates different cellular processes, such as energy metabolism, male fertility and brain development. Regulates of energy metabolism by acting as a hormone favoring pancreatic beta-cell proliferation, insulin secretion and sensitivity and energy expenditure. Uncarboxylated osteocalcin hormone also promotes testosterone production in the testes: acts as a ligand for G protein-coupled receptor GPRC6A at the surface of Leydig cells, initiating a signaling response that promotes the expression of enzymes required for testosterone synthesis in a CREB-dependent manner. Also acts as a regulator of brain development: osteocalcin hormone crosses the blood-brain barrier and acts as a ligand for GPR158 on neurons, initiating a signaling response that prevents neuronal apoptosis in the hippocampus, favors the synthesis of all monoamine neurotransmitters and inhibits that of gamma-aminobutyric acid (GABA). Osteocalcin also crosses the placenta during pregnancy and maternal osteocalcin is required for fetal brain development. The chain is Osteocalcin from Camelops hesternus (Western camel).